Consider the following 87-residue polypeptide: Putative defensin-like protein 231 (87 aa).

Residues 1–26 (MKFATCFLVSYVLVFLVLSVCKEVEA) form the signal peptide. Cystine bridges form between Cys30/Cys85, Cys40/Cys66, Cys48/Cys79, and Cys64/Cys81.

The protein belongs to the DEFL family.

Its subcellular location is the secreted. This is Putative defensin-like protein 231 (SCRL25) from Arabidopsis thaliana (Mouse-ear cress).